The following is a 796-amino-acid chain: uncharacterized protein (796 aa).

Its subcellular location is the mitochondrion. This is an uncharacterized protein from Dictyostelium discoideum (Social amoeba).